The primary structure comprises 356 residues: Cobalt-precorrin-5B C(1)-methyltransferase (356 aa).

Belongs to the CbiD family.

It catalyses the reaction Co-precorrin-5B + S-adenosyl-L-methionine = Co-precorrin-6A + S-adenosyl-L-homocysteine. It functions in the pathway cofactor biosynthesis; adenosylcobalamin biosynthesis; cob(II)yrinate a,c-diamide from sirohydrochlorin (anaerobic route): step 6/10. Catalyzes the methylation of C-1 in cobalt-precorrin-5B to form cobalt-precorrin-6A. This chain is Cobalt-precorrin-5B C(1)-methyltransferase, found in Geobacter sp. (strain M21).